The chain runs to 223 residues: AN1-type zinc finger protein 6 (223 aa).

An A20-type zinc finger spans residues 8–42 (SQAPMLCSTGCGFYGNPRTNGMCSVCYKEHLQRQN). Positions 14, 18, 30, and 33 each coordinate Zn(2+). Residues 41–155 (QNSSNGRISP…PSEEQSKSLE (115 aa)) are disordered. Ser-49 carries the phosphoserine modification. 2 stretches are compositionally biased toward polar residues: residues 77–110 (ALDS…STSV) and 137–148 (SSVSDTTQQPSE). The AN1-type zinc-finger motif lies at 158–204 (KQKKNRCFMCRKKVGLTGFECRCGNVYCGVHRYSDVHNCSYNYKADA). Zn(2+) is bound by residues Cys-164, Cys-167, Cys-178, Cys-180, Cys-185, His-188, His-194, and Cys-196. Position 219 is an N6-acetyllysine (Lys-219).

As to quaternary structure, interacts with PKN1. Interacts with TRAF2. Interacts with mono- and polyubiquitin. Interacts with PEX6. Interacts with PEX5 (Cys-linked ubiquitinated).

The protein localises to the cytoplasm. In terms of biological role, involved in regulation of TNF-alpha induced NF-kappa-B activation and apoptosis. Involved in modulation of 'Lys-48'-linked polyubiquitination status of TRAF2 and decreases association of TRAF2 with RIPK1. Required for PTS1 target sequence-dependent protein import into peroxisomes and PEX5 stability; may cooperate with PEX6. In vitro involved in PEX5 export from the cytosol to peroxisomes. The polypeptide is AN1-type zinc finger protein 6 (Zfand6) (Mus musculus (Mouse)).